A 367-amino-acid chain; its full sequence is AdoMet-dependent heme synthase (367 aa).

In terms of domain architecture, Radical SAM core spans 15-238 (DGSPTCKLIA…TSMHLKATCA (224 aa)). The [4Fe-4S] cluster site is built by C31, C35, and C38.

The protein belongs to the radical SAM superfamily. The cofactor is [4Fe-4S] cluster.

It catalyses the reaction Fe-coproporphyrin III + 2 S-adenosyl-L-methionine = heme b + 2 5'-deoxyadenosine + 2 L-methionine + 2 CO2. It functions in the pathway porphyrin-containing compound metabolism; protoheme biosynthesis. Involved in siroheme-dependent heme b biosynthesis. Catalyzes the conversion of Fe-coproporphyrin III into heme by the oxidative decarboxylation of two propionate side chains. The polypeptide is AdoMet-dependent heme synthase (Nitratidesulfovibrio vulgaris (strain ATCC 29579 / DSM 644 / CCUG 34227 / NCIMB 8303 / VKM B-1760 / Hildenborough) (Desulfovibrio vulgaris)).